The sequence spans 127 residues: MQIPRMSLRQLAWSGAVLLLVGTLLLAWSAVRQQESTLAIRAVHQGTTMPDGFSIWHHLDAHGIPFKSITPKNDTLLITFDSSDQSAAAKAVLDRTLPHGYIIAQQDNNSQAMQWLTRLRDNSHRFG.

The Cytoplasmic portion of the chain corresponds to 1–10 (MQIPRMSLRQ). Residues 11-31 (LAWSGAVLLLVGTLLLAWSAV) form a helical membrane-spanning segment. At 32 to 127 (RQQESTLAIR…RLRDNSHRFG (96 aa)) the chain is on the periplasmic side.

Belongs to the MzrA family. As to quaternary structure, interacts with EnvZ.

Its subcellular location is the cell inner membrane. Modulates the activity of the EnvZ/OmpR two-component regulatory system, probably by directly modulating EnvZ enzymatic activity and increasing stability of phosphorylated OmpR. Links the two-component systems CpxA/CpxR and EnvZ/OmpR. The chain is Modulator protein MzrA from Escherichia coli (strain K12).